Here is a 175-residue protein sequence, read N- to C-terminus: Co-chaperone protein HscB homolog (175 aa).

Residues 7-79 form the J domain; the sequence is SHFALFNLPE…LKRARYLLSL (73 aa).

This sequence belongs to the HscB family. In terms of assembly, interacts with HscA and stimulates its ATPase activity.

Its function is as follows. Co-chaperone involved in the maturation of iron-sulfur cluster-containing proteins. Seems to help targeting proteins to be folded toward HscA. This chain is Co-chaperone protein HscB homolog, found in Paraburkholderia phymatum (strain DSM 17167 / CIP 108236 / LMG 21445 / STM815) (Burkholderia phymatum).